The sequence spans 484 residues: UDP-N-acetylmuramoyl-L-alanyl-D-glutamate--L-lysine ligase (484 aa).

Residue serine 43 participates in UDP-N-acetyl-alpha-D-muramoyl-L-alanyl-D-glutamate binding. 119-125 (GTKGKTT) contributes to the ATP binding site. Residues 161–162 (TT), serine 188, and arginine 196 contribute to the UDP-N-acetyl-alpha-D-muramoyl-L-alanyl-D-glutamate site. Lysine 230 bears the N6-carboxylysine mark. Positions 405-408 (DDPN) match the L-lysine recognition motif motif.

Belongs to the MurCDEF family. MurE subfamily. Carboxylation is probably crucial for Mg(2+) binding and, consequently, for the gamma-phosphate positioning of ATP.

The protein localises to the cytoplasm. The enzyme catalyses UDP-N-acetyl-alpha-D-muramoyl-L-alanyl-D-glutamate + L-lysine + ATP = UDP-N-acetyl-alpha-D-muramoyl-L-alanyl-gamma-D-glutamyl-L-lysine + ADP + phosphate + H(+). The protein operates within cell wall biogenesis; peptidoglycan biosynthesis. Catalyzes the addition of L-lysine to the nucleotide precursor UDP-N-acetylmuramoyl-L-alanyl-D-glutamate (UMAG) in the biosynthesis of bacterial cell-wall peptidoglycan. In Streptococcus agalactiae serotype V (strain ATCC BAA-611 / 2603 V/R), this protein is UDP-N-acetylmuramoyl-L-alanyl-D-glutamate--L-lysine ligase.